A 574-amino-acid polypeptide reads, in one-letter code: 4-oxocyclohexanecarboxylate 2-dehydrogenase (574 aa).

This sequence belongs to the FAD-dependent oxidoreductase 2 family. In terms of assembly, monomer. Homodimer. FAD serves as cofactor.

The catalysed reaction is 4-oxocyclohexane-1-carboxylate + O2 = 4-oxocyclohex-2-ene-1-carboxylate + H2O2. Its activity is regulated as follows. Inhibited by 5,5'-dithio-bis(2- nitrobenzoate) and N-bromosuccinimide, but not by thiol and chelating reagents. In terms of biological role, desaturase involved in a cyclohexanecarboxylate (CHCA) degradation pathway. Catalyzes the conversion of 4-oxocyclohexanecarboxylate (4-oxoCHCA) to 4-oxocyclohexenecarboxylate. Is highly specific for 4-oxocyclohexanecarboxylic acid and shows only slight activity with 4-oxo-2-methylcyclohex-2-enecarboxylic acid. The protein is 4-oxocyclohexanecarboxylate 2-dehydrogenase of Sinomonas cyclohexanicum (Corynebacterium cyclohexanicum).